Consider the following 236-residue polypeptide: 3-deoxy-D-manno-octulosonic acid kinase (236 aa).

Residue Asp166 is part of the active site.

It belongs to the protein kinase superfamily. KdkA/RfaP family.

It localises to the cell inner membrane. It carries out the reaction an alpha-Kdo-(2-&gt;6)-lipid IVA + ATP = a 4-O-phospho-alpha-Kdo-(2-&gt;6)-lipid IVA + ADP + H(+). It participates in bacterial outer membrane biogenesis; LPS core biosynthesis. Functionally, catalyzes the ATP-dependent phosphorylation of the 3-deoxy-D-manno-octulosonic acid (Kdo) residue in Kdo-lipid IV(A) at the 4-OH position. This chain is 3-deoxy-D-manno-octulosonic acid kinase, found in Photobacterium profundum (strain SS9).